The primary structure comprises 411 residues: Bifunctional protein GlmU (411 aa).

Positions 1–204 are pyrophosphorylase; that stretch reads MDAIILCAGK…IGKLHGVELN (204 aa). UTP-binding positions include 6 to 9, Gln74, and Gly79; that span reads LCAG. Positions 80, 130, 142, and 158 each coordinate N-acetyl-alpha-D-glucosamine 1-phosphate. Residues 205–224 are linker; sequence GYWNDIGHPWDVLSANSHFL. The segment at 225-411 is N-acetyltransferase; sequence NKIISKISGK…DELVITKKRN (187 aa). The Proton acceptor role is filled by His308. 2 residues coordinate acetyl-CoA: Ala384 and Lys401.

In the N-terminal section; belongs to the N-acetylglucosamine-1-phosphate uridyltransferase family. The protein in the C-terminal section; belongs to the transferase hexapeptide repeat family.

It catalyses the reaction N-acetyl-alpha-D-glucosamine 1-phosphate + UTP + H(+) = UDP-N-acetyl-alpha-D-glucosamine + diphosphate. It carries out the reaction alpha-D-glucosamine 1-phosphate + acetyl-CoA = N-acetyl-alpha-D-glucosamine 1-phosphate + CoA + H(+). It functions in the pathway nucleotide-sugar biosynthesis; UDP-N-acetyl-alpha-D-glucosamine biosynthesis; N-acetyl-alpha-D-glucosamine 1-phosphate from alpha-D-glucosamine 6-phosphate (route II): step 2/2. The protein operates within nucleotide-sugar biosynthesis; UDP-N-acetyl-alpha-D-glucosamine biosynthesis; UDP-N-acetyl-alpha-D-glucosamine from N-acetyl-alpha-D-glucosamine 1-phosphate: step 1/1. In terms of biological role, catalyzes the last two sequential reactions in the de novo biosynthetic pathway for UDP-N-acetyl-glucosamine (UDP-GlcNAc). Responsible for the acetylation of GlcN-1-P to GlcNAc-1-P, and for the uridyl transfer from UTP to GlcNAc-1-P, to produce UDP-GlcNAc and pyrophosphate. This is Bifunctional protein GlmU from Methanococcus maripaludis (strain C5 / ATCC BAA-1333).